A 103-amino-acid polypeptide reads, in one-letter code: Histone H4 (103 aa).

Over residues 1–14 (MSGRGKGGKGLGKG) the composition is skewed to gly residues. The disordered stretch occupies residues 1–20 (MSGRGKGGKGLGKGGAKRHR). Lys-6 is subject to N6-acetyl-N6-methyllysine; alternate. Residues Lys-6, Lys-9, and Lys-13 each carry the N6-methyllysine; alternate modification. Lys-13 is modified (N6-acetyl-N6-methyllysine; alternate). Residues 17-21 (KRHRK) mediate DNA binding. Lys-92 carries the post-translational modification N6-glutaryllysine.

The protein belongs to the histone H4 family. The nucleosome is a histone octamer containing two molecules each of H2A, H2B, H3 and H4 assembled in one H3-H4 heterotetramer and two H2A-H2B heterodimers. The octamer wraps approximately 147 bp of DNA. Post-translationally, glutarylation at Lys-92 (H4K91glu) destabilizes nucleosomes by promoting dissociation of the H2A-H2B dimers from nucleosomes.

The protein localises to the nucleus. It is found in the chromosome. Functionally, core component of nucleosome. Nucleosomes wrap and compact DNA into chromatin, limiting DNA accessibility to the cellular machineries which require DNA as a template. Histones thereby play a central role in transcription regulation, DNA repair, DNA replication and chromosomal stability. DNA accessibility is regulated via a complex set of post-translational modifications of histones, also called histone code, and nucleosome remodeling. The chain is Histone H4 (HHF1) from Mycosarcoma maydis (Corn smut fungus).